Consider the following 471-residue polypeptide: Arginine biosynthesis bifunctional protein ArgJ, mitochondrial (471 aa).

The substrate site is built by Thr201, Lys230, Thr241, Glu328, Asn466, and Thr471. The active-site Nucleophile is the Thr241.

The protein belongs to the ArgJ family. Heterodimer of an alpha and a beta chain. The alpha and beta chains are autoproteolytically processed from a single precursor protein within the mitochondrion.

The protein localises to the mitochondrion matrix. It carries out the reaction N(2)-acetyl-L-ornithine + L-glutamate = N-acetyl-L-glutamate + L-ornithine. It catalyses the reaction L-glutamate + acetyl-CoA = N-acetyl-L-glutamate + CoA + H(+). The protein operates within amino-acid biosynthesis; L-arginine biosynthesis; L-ornithine and N-acetyl-L-glutamate from L-glutamate and N(2)-acetyl-L-ornithine (cyclic): step 1/1. Its pathway is amino-acid biosynthesis; L-arginine biosynthesis; N(2)-acetyl-L-ornithine from L-glutamate: step 1/4. Functionally, catalyzes two activities which are involved in the cyclic version of arginine biosynthesis: the synthesis of acetylglutamate from glutamate and acetyl-CoA, and of ornithine by transacetylation between acetylornithine and glutamate. The sequence is that of Arginine biosynthesis bifunctional protein ArgJ, mitochondrial from Ajellomyces capsulatus (strain NAm1 / WU24) (Darling's disease fungus).